Reading from the N-terminus, the 466-residue chain is ATP synthase subunit beta (466 aa).

Position 155–162 (155–162 (GGAGVGKT)) interacts with ATP.

It belongs to the ATPase alpha/beta chains family. In terms of assembly, F-type ATPases have 2 components, CF(1) - the catalytic core - and CF(0) - the membrane proton channel. CF(1) has five subunits: alpha(3), beta(3), gamma(1), delta(1), epsilon(1). CF(0) has three main subunits: a(1), b(2) and c(9-12). The alpha and beta chains form an alternating ring which encloses part of the gamma chain. CF(1) is attached to CF(0) by a central stalk formed by the gamma and epsilon chains, while a peripheral stalk is formed by the delta and b chains.

The protein resides in the cell inner membrane. The catalysed reaction is ATP + H2O + 4 H(+)(in) = ADP + phosphate + 5 H(+)(out). Its function is as follows. Produces ATP from ADP in the presence of a proton gradient across the membrane. The catalytic sites are hosted primarily by the beta subunits. This is ATP synthase subunit beta from Bordetella petrii (strain ATCC BAA-461 / DSM 12804 / CCUG 43448).